A 178-amino-acid chain; its full sequence is Large ribosomal subunit protein uL6 (178 aa).

The protein belongs to the universal ribosomal protein uL6 family. In terms of assembly, part of the 50S ribosomal subunit.

Its function is as follows. This protein binds to the 23S rRNA, and is important in its secondary structure. It is located near the subunit interface in the base of the L7/L12 stalk, and near the tRNA binding site of the peptidyltransferase center. The sequence is that of Large ribosomal subunit protein uL6 from Streptococcus pneumoniae (strain 70585).